The primary structure comprises 316 residues: Pantothenate kinase (316 aa).

95 to 102 lines the ATP pocket; the sequence is GSVAVGKS.

The protein belongs to the prokaryotic pantothenate kinase family.

Its subcellular location is the cytoplasm. The enzyme catalyses (R)-pantothenate + ATP = (R)-4'-phosphopantothenate + ADP + H(+). Its pathway is cofactor biosynthesis; coenzyme A biosynthesis; CoA from (R)-pantothenate: step 1/5. This Hamiltonella defensa subsp. Acyrthosiphon pisum (strain 5AT) protein is Pantothenate kinase.